The primary structure comprises 387 residues: Succinate--CoA ligase [ADP-forming] subunit beta (387 aa).

An ATP-grasp domain is found at 9 to 245; the sequence is KDLLESYGLK…KSQENAKELK (237 aa). Residues K46, 53-55, E100, Y103, and E108 each bind ATP; that span reads GRG. Residues N200 and D214 each coordinate Mg(2+). Substrate-binding positions include N265 and 322-324; that span reads GIV.

The protein belongs to the succinate/malate CoA ligase beta subunit family. As to quaternary structure, heterotetramer of two alpha and two beta subunits. It depends on Mg(2+) as a cofactor.

The catalysed reaction is succinate + ATP + CoA = succinyl-CoA + ADP + phosphate. The enzyme catalyses GTP + succinate + CoA = succinyl-CoA + GDP + phosphate. Its pathway is carbohydrate metabolism; tricarboxylic acid cycle; succinate from succinyl-CoA (ligase route): step 1/1. Succinyl-CoA synthetase functions in the citric acid cycle (TCA), coupling the hydrolysis of succinyl-CoA to the synthesis of either ATP or GTP and thus represents the only step of substrate-level phosphorylation in the TCA. The beta subunit provides nucleotide specificity of the enzyme and binds the substrate succinate, while the binding sites for coenzyme A and phosphate are found in the alpha subunit. In Francisella tularensis subsp. holarctica (strain OSU18), this protein is Succinate--CoA ligase [ADP-forming] subunit beta.